The following is a 288-amino-acid chain: Putative aryl-alcohol dehydrogenase AAD10 (288 aa).

It belongs to the aldo/keto reductase family. Aldo/keto reductase 2 subfamily.

This chain is Putative aryl-alcohol dehydrogenase AAD10 (AAD10), found in Saccharomyces cerevisiae (strain ATCC 204508 / S288c) (Baker's yeast).